The primary structure comprises 274 residues: Large ribosomal subunit protein uL2 (274 aa).

The disordered stretch occupies residues 225-274 (MNPVDHPHGGGEGRSPIGRHPVTPWGKPTLGVKTRKKNKASSKLIIKRRK). Positions 257–274 (KTRKKNKASSKLIIKRRK) are enriched in basic residues.

Belongs to the universal ribosomal protein uL2 family. In terms of assembly, part of the 50S ribosomal subunit. Forms a bridge to the 30S subunit in the 70S ribosome.

In terms of biological role, one of the primary rRNA binding proteins. Required for association of the 30S and 50S subunits to form the 70S ribosome, for tRNA binding and peptide bond formation. It has been suggested to have peptidyltransferase activity; this is somewhat controversial. Makes several contacts with the 16S rRNA in the 70S ribosome. The sequence is that of Large ribosomal subunit protein uL2 from Carboxydothermus hydrogenoformans (strain ATCC BAA-161 / DSM 6008 / Z-2901).